The primary structure comprises 235 residues: RNA-free ribonuclease P (235 aa).

This sequence belongs to the HARP family.

The enzyme catalyses Endonucleolytic cleavage of RNA, removing 5'-extranucleotides from tRNA precursor.. Its function is as follows. RNA-free RNase P that catalyzes the removal of the 5'-leader sequence from pre-tRNA to produce the mature 5'-terminus. The chain is RNA-free ribonuclease P from Methanothrix thermoacetophila (strain DSM 6194 / JCM 14653 / NBRC 101360 / PT) (Methanosaeta thermophila).